Consider the following 889-residue polypeptide: Alanine--tRNA ligase (889 aa).

Zn(2+)-binding residues include histidine 564, histidine 568, cysteine 677, and histidine 681.

Belongs to the class-II aminoacyl-tRNA synthetase family. Zn(2+) is required as a cofactor.

Its subcellular location is the cytoplasm. It catalyses the reaction tRNA(Ala) + L-alanine + ATP = L-alanyl-tRNA(Ala) + AMP + diphosphate. In terms of biological role, catalyzes the attachment of alanine to tRNA(Ala) in a two-step reaction: alanine is first activated by ATP to form Ala-AMP and then transferred to the acceptor end of tRNA(Ala). Also edits incorrectly charged Ser-tRNA(Ala) and Gly-tRNA(Ala) via its editing domain. This Rhodopseudomonas palustris (strain ATCC BAA-98 / CGA009) protein is Alanine--tRNA ligase.